Reading from the N-terminus, the 697-residue chain is MQTQEILRILRLPELSDLGQFFRSLSATTLVSMGALAAILAYWLTHRPKALQPPCNLLMQSEEVEDSGGARRSVIGDCTQLLTHYYDDARTMYQVFRRGLSISGNGPCLGFRKPEQPYQWLSYQEVAKRAEFLGSGLLQHDCKVGTEQFIGVFAQNRPEWIIAELACYTYSMVVVPLYDTLGPGSIRYIINTADICTVIVDKPHKAILLLEHVERKETPGLKLVILMEPFDDALRERGKKCGVDIKSMQAIEDSGQENHRVPVPPRPDDLSIVCFTSGTTGNPKGAMLTHGNVVADFSGFLKVTESQWAPTCADVHFSYLPLAHMFERMVQSVVYCHGGRVGFFQGDIRLLSDDMKALRPTIFPVVPRLLNRMYDKIFHQADTSLKRWLLEFAAKRKQAEVRSGIIRNNSIWDELFFNKIQASLGGHVRMIVTGAAPASPTVLGFLRAALGCQVYEGYGQTECTAGCTFTTPGDWTSGHVGAPLPCNHIKLVDAEELNYWTSKGEGEICVKGPNVFKGYLKDEDRTKEALDSDGWLHTGDIGKWLPEGTLKIIDRKKHIFKLAQGEYVAPEKIENIYIRSEPVAQIYVHGDSLKAFLVGIVVPDPEVMPCWAQKKGIEGNYQELCKSKELKKAILDDMVMLGKESGLHSFEQVKAIYIHCDMFSVQNGLLTPTLKAKRPELREYFKKQIEELYSISM.

A helical; Signal-anchor for type III membrane protein transmembrane segment spans residues 25–45 (LSATTLVSMGALAAILAYWLT). Over 46–697 (HRPKALQPPC…QIEELYSISM (652 aa)) the chain is Cytoplasmic.

It belongs to the ATP-dependent AMP-binding enzyme family. Requires Mg(2+) as cofactor. In terms of tissue distribution, expressed predominantly in brain and, to a much lesser extent, in heart and adrenal.

Its subcellular location is the mitochondrion outer membrane. It localises to the peroxisome membrane. The protein localises to the microsome membrane. It is found in the endoplasmic reticulum membrane. The enzyme catalyses a long-chain fatty acid + ATP + CoA = a long-chain fatty acyl-CoA + AMP + diphosphate. The catalysed reaction is (5Z,8Z,11Z,14Z)-eicosatetraenoate + ATP + CoA = (5Z,8Z,11Z,14Z)-eicosatetraenoyl-CoA + AMP + diphosphate. It catalyses the reaction 15-hydroxy-(5Z,8Z,11Z,13E)-eicosatetraenoate + ATP + CoA = 15-hydroxy-(5Z,8Z,11Z,13E)-eicosatetraenoyl-CoA + AMP + diphosphate. It carries out the reaction 12-hydroxy-(5Z,8Z,10E,14Z)-eicosatetraenoate + ATP + CoA = 12-hydroxy-(5Z,8Z,10E,14Z)-eicosatetraenoyl-CoA + AMP + diphosphate. The enzyme catalyses 5-hydroxy-(6E,8Z,11Z,14Z)-eicosatetraenoate + ATP + CoA = 5-hydroxy-(6E,8Z,11Z,14Z)-eicosatetraenoyl-CoA + AMP + diphosphate. The catalysed reaction is hexadecanoate + ATP + CoA = hexadecanoyl-CoA + AMP + diphosphate. It catalyses the reaction (E)-hexadec-2-enoate + ATP + CoA = (2E)-hexadecenoyl-CoA + AMP + diphosphate. In terms of biological role, catalyzes the conversion of long-chain fatty acids to their active form acyl-CoA for both synthesis of cellular lipids, and degradation via beta-oxidation. Plays an important role in fatty acid metabolism in brain and the acyl-CoAs produced may be utilized exclusively for the synthesis of the brain lipid. This is Long-chain-fatty-acid--CoA ligase 6 from Rattus norvegicus (Rat).